The primary structure comprises 262 residues: Tropinone reductase homolog At2g29310 (262 aa).

Residue 13–37 participates in NADP(+) binding; it reads LVTGAASGIGYAIVEELASFGAIIH. Ser146 contacts substrate. Residue Tyr159 is the Proton acceptor of the active site.

Belongs to the short-chain dehydrogenases/reductases (SDR) family. SDR65C subfamily.

The polypeptide is Tropinone reductase homolog At2g29310 (Arabidopsis thaliana (Mouse-ear cress)).